The primary structure comprises 185 residues: Urease accessory protein UreE (185 aa).

A disordered region spans residues 153–185; that stretch reads LRANSAQGHGHSHSHSHDHHGYHHHGDGHWHKH. The segment covering 162 to 175 has biased composition (basic residues); it reads GHSHSHSHDHHGYH. The segment covering 176–185 has biased composition (basic and acidic residues); that stretch reads HHGDGHWHKH.

Belongs to the UreE family.

The protein localises to the cytoplasm. Involved in urease metallocenter assembly. Binds nickel. Probably functions as a nickel donor during metallocenter assembly. The polypeptide is Urease accessory protein UreE (Haemophilus influenzae (strain PittEE)).